We begin with the raw amino-acid sequence, 315 residues long: Endolytic peptidoglycan transglycosylase RlpA (315 aa).

Positions 1 to 19 (MGLALEKVCFLGVIFLISA) are cleaved as a signal peptide. A lipid anchor (N-palmitoyl cysteine) is attached at cysteine 20. A lipid anchor (S-diacylglycerol cysteine) is attached at cysteine 20. Residues 68–79 (SDSQDSNTKDQP) show a composition bias toward basic and acidic residues. A disordered region spans residues 68 to 92 (SDSQDSNTKDQPLDNGMRDSSSIQR). Positions 242 to 315 (SVSGGKFSLQ…YNQNAVLTRE (74 aa)) constitute an SPOR domain.

This sequence belongs to the RlpA family.

Its subcellular location is the cell membrane. Its function is as follows. Lytic transglycosylase with a strong preference for naked glycan strands that lack stem peptides. In Helicobacter pylori (strain ATCC 700392 / 26695) (Campylobacter pylori), this protein is Endolytic peptidoglycan transglycosylase RlpA.